The primary structure comprises 376 residues: Putative peptide import ATP-binding protein BMEII0205 (376 aa).

A disordered region spans residues 1-25 (MPLRPALHLRTGKLRQTPTHNEPDG). Residues 64 to 314 (VRTDDLVRDF…PLHPYSRALL (251 aa)) form the ABC transporter domain. Residue 106-113 (GESGSGKS) coordinates ATP.

The protein belongs to the ABC transporter superfamily. In terms of assembly, the complex is composed of two ATP-binding proteins (BMEII0205 and BMEII0206), two transmembrane proteins (BMEII0207/BMEII0208 and BMEII0209) and a solute-binding protein (BMEII0210).

It localises to the cell inner membrane. Functionally, probably part of an ABC transporter complex that could be involved in peptide import. Probably responsible for energy coupling to the transport system. The sequence is that of Putative peptide import ATP-binding protein BMEII0205 from Brucella melitensis biotype 1 (strain ATCC 23456 / CCUG 17765 / NCTC 10094 / 16M).